A 772-amino-acid polypeptide reads, in one-letter code: Bromo adjacent homology domain-containing 1 protein (772 aa).

Disordered stretches follow at residues 1 to 63 (MTHT…RSLV) and 77 to 117 (LENV…PRKR). The residue at position 8 (S8) is a Phosphoserine. The span at 49 to 61 (TGRRKNYPLRKRS) shows a compositional bias: basic residues. A phosphoserine mark is found at S101 and S121. 3 disordered regions span residues 131–357 (LLER…PADY), 521–582 (QTVA…RTNG), and 723–743 (PSRK…PHRT). Composition is skewed to basic and acidic residues over residues 147–158 (RGGDPHRSRDRA), 170–182 (RLGD…RDLS), and 189–199 (EGARRDGDPAP). Phosphoserine is present on S182. S204 carries the post-translational modification Phosphoserine. A compositionally biased stretch (pro residues) spans 280 to 289 (SAPPHGPPTQ). Residues 299-310 (LENPLRPNLPLL) are compositionally biased toward low complexity. Residues 340–352 (FPAPQLSPLPMPG) are compositionally biased toward pro residues. Positions 536 to 548 (GSKSGLRTGSSCR) are enriched in polar residues. Over residues 549–580 (HTVRSKAARRPSHPKQPRAQRPRPRRRRRRRT) the composition is skewed to basic residues. T580 carries the post-translational modification Phosphothreonine. The BAH domain occupies 616-771 (ETIRVRDTVL…FRHGRILKNP (156 aa)).

As to quaternary structure, interacts with CBX5 (HP1 alpha), HDAC5, MBD1 and SP1. Ubiquitinated in a FBXO11-dependent manner; leading to degradation.

Its subcellular location is the nucleus. It localises to the chromosome. In terms of biological role, heterochromatin protein that acts as a transcription repressor and has the ability to promote the formation of large heterochromatic domains. May act by recruiting heterochromatin proteins such as CBX5 (HP1 alpha), HDAC5 and MBD1. Represses IGF2 expression by binding to its CpG-rich P3 promoter and recruiting heterochromatin proteins. In Mus musculus (Mouse), this protein is Bromo adjacent homology domain-containing 1 protein (Bahd1).